A 65-amino-acid chain; its full sequence is Hirudin-3B' (65 aa).

An interaction with thrombin active site region spans residues Val1–Tyr3. 3 cysteine pairs are disulfide-bonded: Cys6–Cys14, Cys16–Cys28, and Cys22–Cys39. Residues Val40 to Gln65 form a disordered region. Thr45 carries an O-linked (GalNAc...) threonine glycan. The segment at Asp55 to Gln65 is interaction with fibrinogen-binding exosite of thrombin. The span at Asp55–Gln65 shows a compositional bias: acidic residues. Residue Tyr63 is modified to Sulfotyrosine.

This sequence belongs to the protease inhibitor I14 (hirudin) family.

Its subcellular location is the secreted. Hirudin is a potent thrombin-specific protease inhibitor. It forms a stable non-covalent complex with alpha-thrombin, thereby abolishing its ability to cleave fibrinogen. This is Hirudin-3B' from Hirudo medicinalis (Medicinal leech).